Consider the following 330-residue polypeptide: D-alanine--D-alanine ligase (330 aa).

The ATP-grasp domain occupies 120 to 326 (KLWYDALGIP…FKTFLQKAVL (207 aa)). 150–205 (AFKQWGGLFVKAACQGSSVGCYKVTSEAELSKAINDAFGYSQQVLVEKAVKPRELE) is a binding site for ATP. 3 residues coordinate Mg(2+): Asp280, Glu293, and Asn295.

The protein belongs to the D-alanine--D-alanine ligase family. Requires Mg(2+) as cofactor. The cofactor is Mn(2+).

Its subcellular location is the cytoplasm. It catalyses the reaction 2 D-alanine + ATP = D-alanyl-D-alanine + ADP + phosphate + H(+). It participates in cell wall biogenesis; peptidoglycan biosynthesis. In terms of biological role, cell wall formation. The polypeptide is D-alanine--D-alanine ligase (Aliivibrio fischeri (strain ATCC 700601 / ES114) (Vibrio fischeri)).